Reading from the N-terminus, the 7152-residue chain is Replicase polyprotein 1ab (7152 aa).

A CoV Nsp1 globular domain is found at 54–174 (YDNHVKIDCR…HKWFQFCRLY (121 aa)). The 31-residue stretch at 192-222 (FSVEDAYAEVHAEPKGKYSQKAYALLRQYRG) folds into the BetaCoV Nsp1 C-terminal domain. The region spanning 226-488 (VLFVDQYGCD…LITHALYLDY (263 aa)) is the CoV Nsp2 N-terminal domain. Positions 365, 370, 386, and 389 each coordinate Zn(2+). Positions 365-389 (CFNDNCDFYGWVSGNMMDGFSCPLC) are C4. The CoV Nsp2 middle domain occupies 493 to 681 (CGNLEQNHIL…VNKFYTFFKL (189 aa)). The region spanning 697-809 (LKTINGLVCI…LDQAWRFPCA (113 aa)) is the CoV Nsp2 C-terminal domain. Positions 811 to 923 (RKVNFNEKPV…MYCTFAIEDV (113 aa)) constitute a Ubiquitin-like 1 domain. 11 repeat units span residues 945-954 (NDDEDVVTGD), 955-964 (NDDEDVVTGD), 965-974 (NDDEDVVTGD), 975-984 (NDDEDVVTGD), 985-994 (NDDEDVVTGD), 995-1004 (NDDEDVVTGD), 1005-1014 (NDDEDVVTGD), 1015-1024 (NDDEDVVTGD), 1025-1034 (NDDEDVVTGD), 1035-1044 (NDDEDVVTGD), and 1045-1054 (NDDEDVVTGD). The tract at residues 945 to 1054 (NDDEDVVTGD…NDDEDVVTGD (110 aa)) is 11 X 10 AA tandem repeat of N-[DN]-D-E-D-V-V-T-G-D. The disordered stretch occupies residues 947-1036 (DEDVVTGDND…DEDVVTGDND (90 aa)). The Peptidase C16 1 domain maps to 1093–1343 (VFNDVYNDAL…VCFVKGDIIN (251 aa)). Cys-1131 serves as the catalytic For PL1-PRO activity. Positions 1208, 1211, 1234, and 1236 each coordinate Zn(2+). The C4-type 1 zinc finger occupies 1208-1236 (CLKCGFSFDLNGLDAVFFYGDIVSHVCKC). Residues His-1282 and Asp-1293 each act as for PL1-PRO activity in the active site. One can recognise a Macro domain in the interval 1321–1492 (ELAQLYGLCI…IIQKCQITSV (172 aa)). In terms of domain architecture, DPUP spans 1548-1619 (NDVRDYLLSK…TVNQVCVLLA (72 aa)). A Ubiquitin-like 2 domain is found at 1619 to 1674 (AKKIDVLLTVDGVNFKSISLTVGEVFGKILGNVFCDGIDVTKLKCSDFYADKILYQ). The Peptidase C16 2 domain maps to 1688–1948 (SSFGFDQQQL…MVAYNPDLSQ (261 aa)). The For PL2-PRO activity role is filled by Cys-1727. 4 residues coordinate Zn(2+): Cys-1805, Cys-1807, Cys-1839, and Cys-1841. The C4-type 2 zinc finger occupies 1805-1841 (CDCGIKQESRVGVDAVMHFGTLAKTDLFNGYKIGCNC). Catalysis depends on for PL2-PRO activity residues His-1884 and Asp-1898. Residues 1962–2063 (IKAQFKPFAK…TYFNKPSFKS (102 aa)) enclose the Nucleic acid-binding domain. Positions 2078–2227 (ESQGNVVTSV…NDKTIFYTTE (150 aa)) constitute a G2M domain. Transmembrane regions (helical) follow at residues 2196–2216 (AIEF…LLHF), 2257–2277 (FLVV…NVIF), and 2288–2308 (FPIF…LVTI). Residues 2196-2433 (AIEFYGFLKW…FVLLRFYIVV (238 aa)) are HD1. Positions 2293–2354 (GRIVMWIKAT…AIDFVQYEVD (62 aa)) constitute a 3Ecto domain. 2 cysteine pairs are disulfide-bonded: Cys-2309–Cys-2333 and Cys-2324–Cys-2330. Transmembrane regions (helical) follow at residues 2371-2391 (LVIG…LIGL) and 2413-2433 (FIVF…YIVV). The Y1 stretch occupies residues 2441-2531 (GFIRHIVYGC…ELKRPVNPTD (91 aa)). The 368-residue stretch at 2441–2808 (GFIRHIVYGC…LTTPFSLKGG (368 aa)) folds into the CoV Nsp3 Y domain. His-2445, Cys-2450, Cys-2455, Cys-2458, Cys-2491, His-2494, Cys-2498, and Cys-2501 together coordinate Zn(2+). A ZF1 region spans residues 2445–2458 (HIVYGCNKAGCLFC). Residues 2491–2501 (CVKHQWNCFNC) are ZF2. Residues 2532-2624 (ASHYVVTDIK…LVDKKLITTA (93 aa)) form a Y2 region. The interval 2532-2808 (ASHYVVTDIK…LTTPFSLKGG (277 aa)) is coV-Y. Residues 2625–2707 (CNGISVTQTM…KSMISAVAAG (83 aa)) form a Y3 region. Positions 2708–2808 (LEFTDENYNN…LTTPFSLKGG (101 aa)) are Y4. Transmembrane regions (helical) follow at residues 2814-2834 (LLYI…ALLP), 3089-3109 (ASSI…YYLI), 3121-3141 (VVVI…VFQV), 3148-3168 (VYAC…SVIM), and 3173-3193 (IVMY…AMVI). The interval 2814 to 3193 (LLYILFFISL…FCVTYVAMVI (380 aa)) is HD2. The 98-residue stretch at 3207-3304 (IGVNVCNDST…TASVSTSFLQ (98 aa)) folds into the Nsp4C domain. The region spanning 3305–3607 (SGIVKMVSPT…YQQLAGVKLQ (303 aa)) is the Peptidase C30 domain. Active-site for 3CL-PRO activity residues include His-3345 and Cys-3449. The next 7 membrane-spanning stretches (helical) occupy residues 3621-3641 (ILIS…WTIF), 3646-3666 (THMI…MLLV), 3671-3691 (FYLT…NYLV), 3714-3734 (FTYV…IFIT), 3742-3762 (IFSL…WYFG), 3770-3790 (LLFI…SLAI), and 3813-3833 (LILL…GFFS). Positions 3621–3833 (ILISTFLFSC…ILSCYWGFFS (213 aa)) are HD3. In terms of domain architecture, RdRp Nsp7 cofactor spans 3895–3983 (SKLTDVKCAN…DYVQDSTVLQ (89 aa)). Residues 3984–4180 (ALQSEFVNMA…YNEVANAVMQ (197 aa)) enclose the RdRp Nsp8 cofactor domain. The Nsp9 ssRNA-binding domain occupies 4181-4290 (NNELMPHKLK…GTLSSTIRLQ (110 aa)). An ExoN/MTase coactivator domain is found at 4291-4428 (AGVATEYAAN…CVGSGVAVQS (138 aa)). Zn(2+)-binding residues include Cys-4364, Cys-4367, His-4373, Cys-4380, Cys-4406, Cys-4409, Cys-4417, and Cys-4419. 2 zinc fingers span residues 4364 to 4380 (CIYC…DGLC) and 4406 to 4419 (CQVC…SCSC). One can recognise a NiRAN domain in the interval 4433 to 4688 (FLNRVRGTSV…DCELFVNDSY (256 aa)). Mn(2+) is bound by residues Asn-4636 and Asp-4645. One can recognise a Nsp12 Interface domain in the interval 4689-4787 (RQFDLVQYDF…MNLDVDTHRY (99 aa)). 5 residues coordinate Zn(2+): His-4718, Cys-4724, Cys-4729, Cys-4733, and Cys-4910. A Nsp12 RNA-dependent RNA polymerase domain is found at 4788–5355 (RLSLKDLLLY…NMYLKSAVMQ (568 aa)). Residues 4790-5004 (SLKDLLLYAA…HQKCLKSIAA (215 aa)) are rdRp Fingers N-ter. The tract at residues 5005–5043 (TRGVPVVIGTTKFYGGWDDMLRHLIKDVDNPVLMGWDYP) is rdRp Palm N-ter. One can recognise a RdRp catalytic domain in the interval 5035 to 5197 (PVLMGWDYPK…CYNSDYASKG (163 aa)). The interval 5044–5102 (KCDRAMPNILRIVSSLVLARKHEFCCSHGDRFYRLANECAQVLSEIVMCGGCYYVKPGG) is rdRp Fingers C-ter. Zn(2+)-binding residues include His-5065, Cys-5068, and Cys-5069. The rdRp Palm C-ter stretch occupies residues 5103–5238 (TSSGDATTAF…TNGPHEFCSQ (136 aa)). Active-site residues include Ser-5182, Asp-5183, and Asp-5184. The rdRp Thumb stretch occupies residues 5239-5355 (HTMLVKIDGD…NMYLKSAVMQ (117 aa)). In terms of domain architecture, CV ZBD spans 5356 to 5468 (SVGACVVCSS…DDFNKIASCK (113 aa)). The Zn(2+) site is built by Cys-5360, Cys-5363, Cys-5371, Cys-5374, Cys-5381, Cys-5384, His-5388, His-5394, Cys-5405, Cys-5410, Cys-5427, and His-5430. In terms of domain architecture, (+)RNA virus helicase ATP-binding spans 5611-5792 (SVPLLFQTNV…MCCLGPDIFL (182 aa)). Position 5636-5643 (5636-5643 (GPPGTGKS)) interacts with ATP. A (+)RNA virus helicase C-terminal domain is found at 5793–5962 (GNCYRCPKEI…TLSRLHCTTN (170 aa)). Residues 6029 to 6244 (FFITKDEAIK…RCLAIYDCFC (216 aa)) enclose the ExoN domain. Active-site residues include Asp-6047, Glu-6049, and Glu-6148. Zn(2+) contacts are provided by Cys-6164, Cys-6167, Cys-6183, His-6186, His-6214, Cys-6218, and His-6221. Residues His-6225 and Asp-6230 contribute to the active site. Cys-6236 lines the Zn(2+) pocket. Residues 6253–6479 (YPIISNEVSI…NLWNTFTMLQ (227 aa)) enclose the N7-MTase domain. 6288–6294 (DIGNPKG) contacts S-adenosyl-L-methionine. The interval 6366–6380 (CNGGSLYVNKHAFHT) is gpppA-binding. Zn(2+)-binding residues include Cys-6404, Cys-6425, Cys-6436, and His-6439. Residues 6480–6540 (SLENVIYNLV…NIAVELFTKR (61 aa)) enclose the Nsp15 N-terminal oligomerization domain. Positions 6541 to 6661 (SIRHHPELKI…FAMRKDGDDV (121 aa)) constitute an AV-Nsp11N/CoV-Nsp15M domain. The 140-residue stretch at 6711–6850 (EPRSDLERDF…NDNKIMTFYP (140 aa)) folds into the NendoU domain. Active-site residues include His-6741, His-6756, Lys-6796, Lys-6899, Asp-6983, Lys-7023, and Glu-7056. Positions 6855-7149 (TSDWKPGYSM…KEIFVGDSLV (295 aa)) constitute a Nidovirus-type SAM-dependent 2'-O-MTase domain.

Belongs to the coronaviruses polyprotein 1ab family. In terms of assembly, interacts with host PHB and PHB2. Interacts with papain-like protease nsp3 and non-structural protein 6. As to quaternary structure, monomer. Homodimer. Only the homodimer shows catalytic activity. In terms of assembly, interacts with nsp8 and nsp12 to form the replication-transcription complex (RTC): nsp12, nsp7, two subunits of nsp8, and up to two subunits of nsp13. Interacts with nsp7, nsp13 and nsp12 to form the replication-transcription complex (RTC): nsp12, nsp7, two subunits of nsp8, and up to two subunits of nsp13. As to quaternary structure, interacts with nsp12. In terms of assembly, interacts with proofreading exoribonuclease nsp14 and 2'-O-methyltransferase nsp16; these interactions enhance nsp14 and nsp16 enzymatic activities. Interacts with nsp7 and nsp8 to form the replication-transcription complex (RTC): nsp12, nsp7, two subunits of nsp8, and up to two subunits of nsp13. Interacts with nsp9. As to quaternary structure, interacts with nsp8 to form the replication-transcription complex (RTC): nsp12, nsp7, two subunits of nsp8, and up to two subunits of nsp13. Requires Mn(2+) as cofactor. Mg(2+) is required as a cofactor. Specific enzymatic cleavages in vivo by its own proteases yield mature proteins. 3CL-PRO and PL-PRO proteinases are autocatalytically processed.

It localises to the host membrane. The protein localises to the host cytoplasm. The protein resides in the host perinuclear region. It is found in the host endoplasmic reticulum-Golgi intermediate compartment. It catalyses the reaction RNA(n) + a ribonucleoside 5'-triphosphate = RNA(n+1) + diphosphate. The enzyme catalyses ATP + H2O = ADP + phosphate + H(+). The catalysed reaction is Thiol-dependent hydrolysis of ester, thioester, amide, peptide and isopeptide bonds formed by the C-terminal Gly of ubiquitin (a 76-residue protein attached to proteins as an intracellular targeting signal).. It carries out the reaction a 5'-end (N(7)-methyl 5'-triphosphoguanosine)-ribonucleoside in mRNA + S-adenosyl-L-methionine = a 5'-end (N(7)-methyl 5'-triphosphoguanosine)-(2'-O-methyl-ribonucleoside) in mRNA + S-adenosyl-L-homocysteine + H(+). It catalyses the reaction uridylyl-uridylyl-ribonucleotide-RNA = a 3'-end uridylyl-2',3'-cyclophospho-uridine-RNA + a 5'-end dephospho-ribonucleoside-RNA. The enzyme catalyses a 5'-end diphospho-ribonucleoside in mRNA + GTP + H(+) = a 5'-end (5'-triphosphoguanosine)-ribonucleoside in mRNA + diphosphate. The catalysed reaction is a 5'-end (5'-triphosphoguanosine)-ribonucleoside in mRNA + S-adenosyl-L-methionine = a 5'-end (N(7)-methyl 5'-triphosphoguanosine)-ribonucleoside in mRNA + S-adenosyl-L-homocysteine. Functionally, the replicase polyprotein of coronaviruses is a multifunctional protein: it contains the activities necessary for the transcription of negative stranded RNA, leader RNA, subgenomic mRNAs and progeny virion RNA as well as proteinases responsible for the cleavage of the polyprotein into functional products. In terms of biological role, inhibits host translation by interacting with the 40S ribosomal subunit. The nsp1-40S ribosome complex further induces an endonucleolytic cleavage near the 5'UTR of host mRNAs, targeting them for degradation. Viral mRNAs are not susceptible to nsp1-mediated endonucleolytic RNA cleavage thanks to the presence of a 5'-end leader sequence and are therefore protected from degradation. By suppressing host gene expression, nsp1 facilitates efficient viral gene expression in infected cells and evasion from host immune response. May play a role in the modulation of host cell survival signaling pathway by interacting with host PHB and PHB2. Indeed, these two proteins play a role in maintaining the functional integrity of the mitochondria and protecting cells from various stresses. Its function is as follows. Responsible for the cleavages located at the N-terminus of the replicase polyprotein. In addition, PL-PRO possesses a deubiquitinating/deISGylating activity and processes both 'Lys-48'- and 'Lys-63'-linked polyubiquitin chains from cellular substrates. Participates together with nsp4 in the assembly of virally-induced cytoplasmic double-membrane vesicles necessary for viral replication. Antagonizes innate immune induction of type I interferon by blocking the phosphorylation, dimerization and subsequent nuclear translocation of host IRF3. Also prevents host NF-kappa-B signaling. Functionally, participates in the assembly of virally-induced cytoplasmic double-membrane vesicles necessary for viral replication. In terms of biological role, cleaves the C-terminus of replicase polyprotein at 11 sites. Recognizes substrates containing the core sequence [ILMVF]-Q-|-[SGACN]. Also able to bind an ADP-ribose-1''-phosphate (ADRP). Plays a role in the initial induction of autophagosomes from host endoplasmic reticulum. Later, limits the expansion of these phagosomes that are no longer able to deliver viral components to lysosomes. Its function is as follows. Forms a hexadecamer with nsp8 (8 subunits of each) that may participate in viral replication by acting as a primase. Alternatively, may synthesize substantially longer products than oligonucleotide primers. Functionally, forms a hexadecamer with nsp7 (8 subunits of each) that may participate in viral replication by acting as a primase. Alternatively, may synthesize substantially longer products than oligonucleotide primers. In terms of biological role, forms a primer, NSP9-pU, which is utilized by the polymerase for the initiation of RNA chains. Interacts with ribosome signal recognition particle RNA (SRP). Together with NSP8, suppress protein integration into the cell membrane, thereby disrupting host immune defenses. Plays a pivotal role in viral transcription by stimulating both nsp14 3'-5' exoribonuclease and nsp16 2'-O-methyltransferase activities. Therefore plays an essential role in viral mRNAs cap methylation. Its function is as follows. RNA-directed RNA polymerase that catalyzes the transcription of viral genomic and subgenomic RNAs. Acts in complex with nsp7 and nsp8 to transcribe both the minus and positive strands of genomic RNA. The kinase-like NiRAN domain of NSP12 attaches one or more nucleotides to the amino terminus of NSP9, forming a covalent RNA-protein intermediate that serves as transcription/replication primer. Subgenomic RNAs (sgRNAs) are formed by discontinuous transcription: The polymerase has the ability to pause at transcription-regulating sequences (TRS) and jump to the leader TRS, resulting in a major deletion. This creates a series of subgenomic RNAs that are replicated, transcribed and translated. In addition, Nsp12 is a subunit of the viral RNA capping enzyme that catalyzes the RNA guanylyltransferase reaction for genomic and sub-genomic RNAs. Subsequently, the NiRAN domain transfers RNA to GDP, and forms the core cap structure GpppA-RNA. Functionally, multi-functional protein with a zinc-binding domain in N-terminus displaying RNA and DNA duplex-unwinding activities with 5' to 3' polarity. Activity of helicase is dependent on magnesium. In terms of biological role, plays a role in viral RNA synthesis through two distinct activities. The N7-guanine methyltransferase activity plays a role in the formation of the cap structure GpppA-RNA. The proofreading exoribonuclease reduces the sensitivity of the virus to RNA mutagens during replication. This activity acts on both ssRNA and dsRNA in a 3'-5' direction. Plays a role in viral transcription/replication and prevents the simultaneous activation of host cell dsRNA sensors, such as MDA5/IFIH1, OAS, and PKR. Acts by degrading the 5'-polyuridines generated during replication of the poly(A) region of viral genomic and subgenomic RNAs. Catalyzes a two-step reaction in which a 2'3'-cyclic phosphate (2'3'-cP) is first generated by 2'-O transesterification, which is then hydrolyzed to a 3'-phosphate (3'-P). If not degraded, poly(U) RNA would hybridize with poly(A) RNA tails and activate host dsRNA sensors. Its function is as follows. Methyltransferase that mediates mRNA cap 2'-O-ribose methylation to the 5'-cap structure of viral mRNAs. N7-methyl guanosine cap is a prerequisite for binding of nsp16. Therefore plays an essential role in viral mRNAs cap methylation which is essential to evade immune system. In Homo sapiens (Human), this protein is Replicase polyprotein 1ab (rep).